A 360-amino-acid polypeptide reads, in one-letter code: Photosystem II protein D1 (360 aa).

Helical transmembrane passes span 29-46, 118-133, and 142-156; these read YIGW…TATS, HFLL…EWEL, and WIFV…AASA. His118 contacts chlorophyll a. Pheophytin a is bound at residue Tyr126. Positions 170 and 189 each coordinate [CaMn4O5] cluster. The chain crosses the membrane as a helical span at residues 197–218; it reads FHMAGVAGVFGGSLFSAMHGSL. Position 198 (His198) interacts with chlorophyll a. A quinone-binding positions include His215 and 264-265; that span reads SF. His215 contacts Fe cation. His272 is a binding site for Fe cation. Residues 274 to 288 traverse the membrane as a helical segment; the sequence is FLAAWPVVGIWLTAM. [CaMn4O5] cluster-binding residues include His332, Glu333, Asp342, and Ala344. A propeptide spanning residues 345-360 is cleaved from the precursor; sequence SGDVLPVALNAPAVNG.

Belongs to the reaction center PufL/M/PsbA/D family. In terms of assembly, PSII is composed of 1 copy each of membrane proteins PsbA, PsbB, PsbC, PsbD, PsbE, PsbF, PsbH, PsbI, PsbJ, PsbK, PsbL, PsbM, PsbT, PsbX, PsbY, PsbZ, Psb30/Ycf12, at least 3 peripheral proteins of the oxygen-evolving complex and a large number of cofactors. It forms dimeric complexes. It depends on The D1/D2 heterodimer binds P680, chlorophylls that are the primary electron donor of PSII, and subsequent electron acceptors. It shares a non-heme iron and each subunit binds pheophytin, quinone, additional chlorophylls, carotenoids and lipids. D1 provides most of the ligands for the Mn4-Ca-O5 cluster of the oxygen-evolving complex (OEC). There is also a Cl(-1) ion associated with D1 and D2, which is required for oxygen evolution. The PSII complex binds additional chlorophylls, carotenoids and specific lipids. as a cofactor. Tyr-161 forms a radical intermediate that is referred to as redox-active TyrZ, YZ or Y-Z. In terms of processing, C-terminally processed by CTPA; processing is essential to allow assembly of the oxygen-evolving complex and thus photosynthetic growth.

The protein resides in the plastid. Its subcellular location is the chloroplast thylakoid membrane. The catalysed reaction is 2 a plastoquinone + 4 hnu + 2 H2O = 2 a plastoquinol + O2. Its function is as follows. Photosystem II (PSII) is a light-driven water:plastoquinone oxidoreductase that uses light energy to abstract electrons from H(2)O, generating O(2) and a proton gradient subsequently used for ATP formation. It consists of a core antenna complex that captures photons, and an electron transfer chain that converts photonic excitation into a charge separation. The D1/D2 (PsbA/PsbD) reaction center heterodimer binds P680, the primary electron donor of PSII as well as several subsequent electron acceptors. This Trieres chinensis (Marine centric diatom) protein is Photosystem II protein D1.